Consider the following 599-residue polypeptide: UvrABC system protein C (599 aa).

The 79-residue stretch at 18 to 96 (QLPGVYKMLG…IKQHRPPYNI (79 aa)) folds into the GIY-YIG domain. The region spanning 207–242 (KELNQELIAKMEQAAADLEFEKAVFYRDRLSLLREV) is the UVR domain.

The protein belongs to the UvrC family. Interacts with UvrB in an incision complex.

It is found in the cytoplasm. The UvrABC repair system catalyzes the recognition and processing of DNA lesions. UvrC both incises the 5' and 3' sides of the lesion. The N-terminal half is responsible for the 3' incision and the C-terminal half is responsible for the 5' incision. This Acinetobacter baumannii (strain SDF) protein is UvrABC system protein C.